A 491-amino-acid polypeptide reads, in one-letter code: Lysine--tRNA ligase (491 aa).

Mg(2+) contacts are provided by Glu-400 and Glu-407.

The protein belongs to the class-II aminoacyl-tRNA synthetase family. In terms of assembly, homodimer. Mg(2+) is required as a cofactor.

The protein localises to the cytoplasm. The catalysed reaction is tRNA(Lys) + L-lysine + ATP = L-lysyl-tRNA(Lys) + AMP + diphosphate. In Mesomycoplasma hyopneumoniae (strain 7448) (Mycoplasma hyopneumoniae), this protein is Lysine--tRNA ligase.